The sequence spans 146 residues: Large ribosomal subunit protein uL15 (146 aa).

Residues 1–18 (MKLHELKPTPGSRHERNR) show a composition bias toward basic and acidic residues. Residues 1-69 (MKLHELKPTP…RLPKRGFNNP (69 aa)) form a disordered region. Over residues 42–52 (SGGGVRPGFEG) the composition is skewed to gly residues.

This sequence belongs to the universal ribosomal protein uL15 family. Part of the 50S ribosomal subunit.

Its function is as follows. Binds to the 23S rRNA. In Exiguobacterium sp. (strain ATCC BAA-1283 / AT1b), this protein is Large ribosomal subunit protein uL15.